A 228-amino-acid polypeptide reads, in one-letter code: Putative NAC domain-containing protein 61 (228 aa).

One can recognise an NAC domain in the interval Leu5 to Arg156. Disordered stretches follow at residues Ala77 to Ser96 and Arg166 to Leu197. The span at Gly80 to Gly89 shows a compositional bias: low complexity. Positions Leu168–Asn193 are enriched in polar residues.

Its subcellular location is the nucleus. This Arabidopsis thaliana (Mouse-ear cress) protein is Putative NAC domain-containing protein 61 (NAC061).